The following is a 209-amino-acid chain: Ribosomal RNA small subunit methyltransferase G (209 aa).

Residues Gly71, Phe76, 122–123 (AE), and Arg135 contribute to the S-adenosyl-L-methionine site.

Belongs to the methyltransferase superfamily. RNA methyltransferase RsmG family.

It localises to the cytoplasm. In terms of biological role, specifically methylates the N7 position of a guanine in 16S rRNA. This Phocaeicola vulgatus (strain ATCC 8482 / DSM 1447 / JCM 5826 / CCUG 4940 / NBRC 14291 / NCTC 11154) (Bacteroides vulgatus) protein is Ribosomal RNA small subunit methyltransferase G.